Here is a 1248-residue protein sequence, read N- to C-terminus: Ankyrin repeat and sterile alpha motif domain-containing protein 1B (1248 aa).

ANK repeat units lie at residues 2–31 (GKDQ…GGIL), 58–87 (SGYT…STNV), 91–120 (KGYF…SHSR), 127–156 (ENET…DPTI), 160–189 (KLET…NLMS), 193–222 (RKHT…DVSC), and 225–254 (EKGS…DANI). A disordered region spans residues 296-322 (EPVQEDATQETHISSPVESPSQKTKSE). The segment covering 305–322 (ETHISSPVESPSQKTKSE) has biased composition (polar residues). Phosphoserine occurs at positions 309, 310, 314, 353, and 364. Disordered stretches follow at residues 367–400 (ELGK…NTCG), 474–514 (APSP…PDTA), and 558–623 (SFTA…ENPF). The span at 371–384 (NGSQSVRTSSTINL) shows a compositional bias: polar residues. Over residues 388–397 (EVEEEDDDEN) the composition is skewed to acidic residues. Phosphothreonine is present on threonine 503. Residues serine 507 and serine 510 each carry the phosphoserine modification. Residues 558–575 (SFTASPPASPPTSSVGTT) are compositionally biased toward low complexity. Basic and acidic residues predominate over residues 577–601 (VKNEGTNHTDDLSRQDDNDPPKEYD). At serine 738 the chain carries Phosphoserine. Positions 749-777 (EKTSRVNWSESSTAEHSSKGNSERTPSFT) are disordered. Polar residues predominate over residues 753–763 (RVNWSESSTAE). At threonine 773 the chain carries Phosphothreonine. Phosphoserine is present on serine 775. 2 consecutive SAM domains span residues 810–876 (CPVQ…LPKM) and 884–949 (YHPT…RLHD). The residue at position 901 (tyrosine 901) is a Phosphotyrosine. The short motif at 935–938 (HRKR) is the Nuclear localization signal element. Residues 944-989 (GDRLHDDPPQKPPRSITLREPSGNHTPPQLSPSLSQSTYTTGGSLD) are disordered. Positions 969-984 (TPPQLSPSLSQSTYTT) are enriched in low complexity. Serine 974 carries the post-translational modification Phosphoserine. Phosphotyrosine is present on tyrosine 1007. In terms of domain architecture, PID spans 1056–1213 (IFQSCDYKAF…SFENKPSKPI (158 aa)). Positions 1197-1248 (HSSTLPESFENKPSKPIPKPRVSIRKSVDLLHASHTGQEPSERHTEEALRKF) are disordered. Positions 1236–1248 (PSERHTEEALRKF) are enriched in basic and acidic residues.

As to quaternary structure, isoform 3 interacts with DLG4. Interacts with EPHA8. Isoform 2 interacts with COIL. Isoform 4 interacts with APP and EPHA8. Isoform 6 interacts with EPHA8. Post-translationally, isoform 3 nuclear translocation requires an NMDAR-dependent proteolytic cleavage. As to expression, highly expressed in marrow from patients with pre-B ALL associated with the t(1;19) translocation. Strongly expressed in brain and testis. Expressed in fetal brain. Isoform 4 is highly expressed in brain (at protein level). Isoform 6 is expressed in brain and several cancer cell lines.

The protein resides in the cytoplasm. It is found in the nucleus. The protein localises to the postsynaptic density. It localises to the cell projection. Its subcellular location is the dendritic spine. The protein resides in the cajal body. Isoform 2 may participate in the regulation of nucleoplasmic coilin protein interactions in neuronal and transformed cells. Its function is as follows. Isoform 3 can regulate global protein synthesis by altering nucleolar numbers. In terms of biological role, isoform 4 may play a role as a modulator of APP processing. Overexpression can down-regulate APP processing. This is Ankyrin repeat and sterile alpha motif domain-containing protein 1B (ANKS1B) from Homo sapiens (Human).